We begin with the raw amino-acid sequence, 451 residues long: ACT domain-containing protein ACR4 (451 aa).

4 ACT domains span residues 35-118 (VIRV…VIPS), 123-200 (VIEL…NTPR), 259-335 (VVTV…VSEG), and 337-416 (KLEL…QEQQ). The segment at 409-428 (KNNPQEQQQRQKSPSHESPT) is disordered. The span at 410 to 420 (NNPQEQQQRQK) shows a compositional bias: polar residues.

In terms of tissue distribution, highly expressed in flowers and at lower levels in leaves and siliques.

In terms of biological role, may bind amino acids. This Arabidopsis thaliana (Mouse-ear cress) protein is ACT domain-containing protein ACR4.